The primary structure comprises 824 residues: Protein bicaudal D homolog 2 (824 aa).

S2 bears the N-acetylserine mark. Residues 20-269 (EWLRAEVKRL…ELSHYMSIND (250 aa)) adopt a coiled-coil conformation. An interacts with DYNLL1, DYNC1H1, DYNC1I2, DCTN1 and DCTN2 region spans residues 25–398 (EVKRLSHELA…RLTENLSALR (374 aa)). Phosphoserine occurs at positions 190, 224, and 318. The tract at residues 311–330 (LPLDNKTSTPKKEGLAPPSP) is disordered. Phosphothreonine is present on T319. The interaction with KIF5A stretch occupies residues 334-599 (SDLLSELNIS…LLAPEAGRAD (266 aa)). Residues 338–537 (SELNISEIQK…VTFSEELANL (200 aa)) adopt a coiled-coil conformation. S343 and S395 each carry phosphoserine. Disordered stretches follow at residues 398 to 425 (RRLQ…GDYY), 559 to 622 (EGQG…DPRR), and 804 to 824 (EQTR…TPSL). The segment covering 402-422 (ASKERQTALDNEKDRDSHEDG) has biased composition (basic and acidic residues). Phosphoserine occurs at positions 568, 574, and 582. An interaction with RANBP2 region spans residues 590-824 (LLAPEAGRAD…PKTKPATPSL (235 aa)). T602 is subject to Phosphothreonine. Residues 604–618 (DSSPSPGSSLPSPLS) are compositionally biased toward low complexity. The stretch at 666–808 (DKDKEALMEE…LELDHEQTRR (143 aa)) forms a coiled coil. The interacts with RAB6A stretch occupies residues 666–814 (DKDKEALMEE…QTRRGRAKAA (149 aa)). T821 carries the phosphothreonine modification. Position 823 is a phosphoserine (S823).

This sequence belongs to the BicD family. Part of a tripartite complex with dynein and dynactin, acts an adapter linking the dynein motor complex and dynactin. Interacts with CPNE4 (via VWFA domain). Interacts with RAB6A. Interacts with NEK9. Interacts with DNAI1. Interacts with DYNC1H1. Interacts with RANBP2. Binds preferentially to tyrosinated microtubules than to detyrosinated microtubules. Interacts with DYNLL1, DYNC1I2; DCTN1, DCTN2 and KIF5A. Interacts with KIF1C. In terms of processing, phosphorylated by NEK9 in vitro. Ubiquitous.

The protein localises to the golgi apparatus. The protein resides in the cytoplasm. Its subcellular location is the cytoskeleton. It is found in the nucleus envelope. It localises to the nucleus. The protein localises to the nuclear pore complex. Its function is as follows. Acts as an adapter protein linking the dynein motor complex to various cargos and converts dynein from a non-processive to a highly processive motor in the presence of dynactin. Facilitates and stabilizes the interaction between dynein and dynactin and activates dynein processivity (the ability to move along a microtubule for a long distance without falling off the track). Facilitates the binding of RAB6A to the Golgi by stabilizing its GTP-bound form. Regulates coat complex coatomer protein I (COPI)-independent Golgi-endoplasmic reticulum transport via its interaction with RAB6A and recruitment of the dynein-dynactin motor complex. Contributes to nuclear and centrosomal positioning prior to mitotic entry through regulation of both dynein and kinesin-1. During G2 phase of the cell cycle, associates with RANBP2 at the nuclear pores and recruits dynein and dynactin to the nuclear envelope to ensure proper positioning of the nucleus relative to centrosomes prior to the onset of mitosis. The chain is Protein bicaudal D homolog 2 from Homo sapiens (Human).